A 67-amino-acid chain; its full sequence is Conotoxin reg3.8 (67 aa).

Residues 1–22 (MMSKLGVLLTICLLLFPLSVLP) form the signal peptide. Positions 23 to 50 (LDGDQLADQPARHAQSAERNARFHPVKR) are excised as a propeptide. Disulfide bonds link Cys51–Cys65, Cys52–Cys63, and Cys57–Cys66. Cysteine amide is present on Cys66.

The protein belongs to the conotoxin M superfamily. Expressed by the venom duct.

It is found in the secreted. The polypeptide is Conotoxin reg3.8 (Conus regius (Crown cone)).